Reading from the N-terminus, the 890-residue chain is Exo-beta-D-glucosaminidase (890 aa).

Positions 1-18 are cleaved as a signal peptide; the sequence is MIAKAVAALLLGSGLASA. Residues 19–26 constitute a propeptide that is removed on maturation; the sequence is AGTPLTSK. N-linked (GlcNAc...) asparagine glycans are attached at residues Asn194, Asn334, and Asn438. Catalysis depends on Asp462, which acts as the Proton donor. Residue Glu537 is the Nucleophile of the active site. N-linked (GlcNAc...) asparagine glycosylation is found at Asn576 and Asn687.

This sequence belongs to the glycosyl hydrolase 2 family. In terms of assembly, monomer.

The protein localises to the secreted. It is found in the extracellular space. It carries out the reaction Hydrolysis of chitosan or chitosan oligosaccharides to remove successive D-glucosamine residues from the non-reducing termini.. Its function is as follows. Hydrolyzes chitosan and chitooligosaccharides with retention of anomeric configuration. Has no activity against beta-D-galactoside, beta-D-glucuronide, beta-D-mannoside, chitin, glycol chitosan, cellulose, N,N'-diacetylchitibiose and pNP-GlcNAc. The sequence is that of Exo-beta-D-glucosaminidase from Hypocrea virens (Gliocladium virens).